We begin with the raw amino-acid sequence, 249 residues long: Deoxyribose-phosphate aldolase (249 aa).

The Proton donor/acceptor role is filled by aspartate 109. Lysine 171 functions as the Schiff-base intermediate with acetaldehyde in the catalytic mechanism. Lysine 200 serves as the catalytic Proton donor/acceptor.

Belongs to the DeoC/FbaB aldolase family. DeoC type 1 subfamily.

The protein localises to the cytoplasm. The enzyme catalyses 2-deoxy-D-ribose 5-phosphate = D-glyceraldehyde 3-phosphate + acetaldehyde. The protein operates within carbohydrate degradation; 2-deoxy-D-ribose 1-phosphate degradation; D-glyceraldehyde 3-phosphate and acetaldehyde from 2-deoxy-alpha-D-ribose 1-phosphate: step 2/2. Its function is as follows. Catalyzes a reversible aldol reaction between acetaldehyde and D-glyceraldehyde 3-phosphate to generate 2-deoxy-D-ribose 5-phosphate. In Klebsiella pneumoniae subsp. pneumoniae (strain ATCC 700721 / MGH 78578), this protein is Deoxyribose-phosphate aldolase.